The primary structure comprises 127 residues: Large ribosomal subunit protein uL22 (127 aa).

Residues 106 to 117 (GAPEGVPVGGAV) are compositionally biased toward low complexity. A disordered region spans residues 106-127 (GAPEGVPVGGAVDTPGDEEEEE).

Belongs to the universal ribosomal protein uL22 family. In terms of assembly, part of the 50S ribosomal subunit.

This protein binds specifically to 23S rRNA; its binding is stimulated by other ribosomal proteins, e.g. L4, L17, and L20. It is important during the early stages of 50S assembly. It makes multiple contacts with different domains of the 23S rRNA in the assembled 50S subunit and ribosome. Functionally, the globular domain of the protein is located near the polypeptide exit tunnel on the outside of the subunit, while an extended beta-hairpin is found that lines the wall of the exit tunnel in the center of the 70S ribosome. This chain is Large ribosomal subunit protein uL22, found in Rubrobacter xylanophilus (strain DSM 9941 / JCM 11954 / NBRC 16129 / PRD-1).